Consider the following 494-residue polypeptide: O-acetyltransferase ptmV (494 aa).

The disordered stretch occupies residues 181-203; the sequence is ESQQDSREKLRHSGGPPDPRFDH.

Belongs to the fumigaclavine B O-acetyltransferase family. As to quaternary structure, monomer.

Its pathway is secondary metabolite biosynthesis. Its function is as follows. O-acetyltransferase; part of the gene cluster that mediates the biosynthesis of the indole diterpenes penitrems. The geranylgeranyl diphosphate (GGPP) synthase ptmG catalyzes the first step in penitrem biosynthesis via conversion of farnesyl pyrophosphate and isopentyl pyrophosphate into geranylgeranyl pyrophosphate (GGPP). Condensation of indole-3-glycerol phosphate with GGPP by the prenyl transferase ptmC then forms 3-geranylgeranylindole (3-GGI). Epoxidation by the FAD-dependent monooxygenase ptmM leads to a epoxidized-GGI that is substrate of the terpene cyclase ptmB for cyclization to yield paspaline. Paspaline is subsequently converted to 13-desoxypaxilline by the cytochrome P450 monooxygenase ptmP, the latter being then converted to paxilline by the cytochrome P450 monooxygenase ptmQ. Paxilline is converted to beta-paxitriol via C-10 ketoreduction by the short-chain dehydrogenase ptmH which can be monoprenylated at the C-20 by the indole diterpene prenyltransferase ptmD. A two-step elimination (acetylation and elimination) process performed by the O-acetyltransferase ptmV and ptmI leads to the production of the prenylated form of penijanthine. The FAD-linked oxidoreductase ptmO then converts the prenylated form of penijanthine into PC-M5 which is in turn transformed into PC-M4 by the aromatic dimethylallyltransferase ptmE. Five sequential oxidative transformations performed by the cytochrome P450 monooxygenases ptmK, ptmU, ptmL, ptmN and ptmJ yield the various penitrem compounds. PtmK, ptmU and ptmM are involved in the formation of the key bicyclic ring of penitrem C via the formation of the intermediates secopenitrem D and penitrem D. PtmL catalyzes the epoxidation of penitrem D and C to yield penitrem B and F, respectively. PtmJ catalyzes the last benzylic hydroxylation to convert penitrem B to prenitrem E and penitrem F to penitrem A. The polypeptide is O-acetyltransferase ptmV (Penicillium ochrochloron).